The chain runs to 122 residues: Small ribosomal subunit protein uS13 (122 aa).

Residues 92–122 (HRMGLPVRGQRTKTNARTRKGPSKPVSGKKK) form a disordered region. Positions 101–122 (QRTKTNARTRKGPSKPVSGKKK) are enriched in basic residues.

This sequence belongs to the universal ribosomal protein uS13 family. Part of the 30S ribosomal subunit. Forms a loose heterodimer with protein S19. Forms two bridges to the 50S subunit in the 70S ribosome.

Its function is as follows. Located at the top of the head of the 30S subunit, it contacts several helices of the 16S rRNA. In the 70S ribosome it contacts the 23S rRNA (bridge B1a) and protein L5 of the 50S subunit (bridge B1b), connecting the 2 subunits; these bridges are implicated in subunit movement. Contacts the tRNAs in the A and P-sites. The chain is Small ribosomal subunit protein uS13 from Ruminiclostridium cellulolyticum (strain ATCC 35319 / DSM 5812 / JCM 6584 / H10) (Clostridium cellulolyticum).